Here is a 442-residue protein sequence, read N- to C-terminus: MVSLVPCGFAQVLCTNPLDIGELRNYKSKQCVDIVGNQGSGNIATHDCDGLSDQQIIMCGDGTIRNEARNYCFTPDGSGNANVMSSPCTLYPEIPSSQRWRLGRKKAFTDNGGIEQVATEIINLASGKCLDVEGSDGTGDIGVYDCQNLDDQYFYIRSRGPELFYGRLRNEKSDLCLDVEGSEGKGNVLMYSCEDNLDQWFRYYENGEIVNAKQGMCLDVEGSDGSGNVGIYRCDDLRDQMWSRPNAYCNGDYCSFLNKESNKCLDVSGDQGTGDVGTWQCDGLPDQRFKWVFDDWEVPTATWNMVGCDQNGKVSQQISNTISFSSTVTAGVAVEVSSTIEKGVIFAKASVSVKVTASLSKAWTNSQSGTTAITYTCDNYDSDEEFTRGCMWQLAIETTEVKSGDLLVWNPQIIKCTRSNTAPGCAPFTKCANEDCTFCTDI.

The propeptide at M1 to A10 is removed in mature form. Q11 is subject to Pyrrolidone carboxylic acid. The interval Q11 to N304 is has hemagglutinating activity towards rabbit erythrocytes, but no hemolytic activity towards them. 3 disulfides stabilise this stretch: C14–C59, C31–C48, and C72–C88. D-galactose-binding positions include D19 and D33 to G36. 2 Ricin B-type lectin domains span residues S28 to L102 and E115 to P245. Ca(2+) is bound by residues D33, I34, and G36. The Mg(2+) site is built by N42 and I43. D49 contacts D-galactose. D53 provides a ligand contact to Ca(2+). Residues N82 and V83 each contribute to the Mg(2+) site. Residues V117 and D131 to G134 each bind D-galactose. A disulfide bridge links C129 with C146. The Ca(2+) site is built by D131, V132, and G134. A Mg(2+)-binding site is contributed by I141. Y144 to Q147 lines the D-galactose pocket. The Ca(2+) site is built by D151, D178, V179, and G181. Cysteines 176 and 193 form a disulfide. Position 178–181 (D178–G181) interacts with D-galactose. Mg(2+) contacts are provided by N187 and V188. Y191–E194 provides a ligand contact to D-galactose. Residues D198, D219, V220, and G222 each contribute to the Ca(2+) site. An intrachain disulfide couples C217 to C234. D219–G222 serves as a coordination point for D-galactose. Mg(2+) is bound by residues N228 and V229. Residue Y232–D235 participates in D-galactose binding. D239 serves as a coordination point for Ca(2+). Cystine bridges form between C249–C254 and C264–C281. In terms of domain architecture, Ricin B-type lectin 3 spans S261 to F293. D266, V267, and G269 together coordinate Ca(2+). D266–G269 contributes to the D-galactose binding site. 2 residues coordinate Mg(2+): D275 and V276. Residues W279–D282 and D286 contribute to the D-galactose site. D286 provides a ligand contact to Ca(2+). The has a strong tendency to self-associate leading to formation of oligomers stretch occupies residues D294–I442. Cystine bridges form between C308-C390, C377-C416, C425-C439, and C431-C436.

Oligomerizes in the human and rabbit erythrocyte membranes. Oligomerization is induced by binding of beta-1,4-linked disaccharide ligands such as lactose, lactulose, N-acetyllactosamine and phenyl-beta-D-galactoside, but only a little by N-acetylgalactosamine and galactose, and not at all by melibiose in aqueous solution in the presence of high salt concentration and pH 10. Forms heptamers that assemble into larger 21mer oligomers, which may be inserted as a transmembrane pore to the erythrocyte membrane. Requires Ca(2+) as cofactor. Mg(2+) serves as cofactor. In terms of tissue distribution, expressed in body fluid (at protein level).

Its subcellular location is the secreted. Its activity is regulated as follows. Ca(2+) is required for hemolytic activity and the activity increases with increasing calcium concentration. Hemolytic activity is inhibited by N-acetylgalactosamine (GalNAc), lactose, lactulose, galactosamine, dextran with molecular masses greater than 4 kDa, to a lesser extent by inulin and only slightly by sucrose and melezitose, but not by glucose or mannose. The activity is abolished in the presence of 10 mM EDTA. Lactose-binding increases with increasing calcium concentration, but calcium has no effect on hemagglutinating activity. Cytotoxic effect on Madin-Darby canine kidney (MDCK) cell line is strongly inhibited by galactose, lactose and N-acetylgalactosamine (GalNAc), but not by raffinose, N-acetylglucosamine (GlcNAc), glucose, mannose, ribose or sucrose. Pore formation in artificial lactosyl ceramide (LacCer) or globotetraosylceramide (Gb4Cer) containing liposomes is strongly inhibited by lactose. Its function is as follows. Galactose/N-acetylgalactosamine (Gal/GalNAc)-binding lectin with hemolytic activity. Favors saccharides that have a beta-1,4 linkage at the non-reducing end rather than saccharides having alpha-1,6 or alpha-1,4 linkages. Binds lactose, lactulose, GalNAc, galactosamine, methyl alpha-galactopyranoside, methyl beta-galactopyranoside, N-acetyllactosamine, p-nitrophenyl beta-D-galactopyranoside (pNP-Gal), p-nitrophenyl N-acetyl-beta-D-galactosaminide (pNP-GalNAc), asialofetuin, and human erythrocyte membrane lipids lactosyl ceramide (LacCer) and globoside globotetraosylceramide (Gb4Cer). Binds moderately to galactose, melibiose, raffinose, fucose, methyl alpha-galactoside and methyl beta-galactoside. Binds weakly to glucose, mannose and N-acetylglucosamine (GlcNAc). Has hemolytic activity towards human (A, B and O-type), rabbit and rat erythrocytes, but not towards mouse, chicken or horse erythrocytes. Forms ion-permeable transmembrane pores in the erythrocyte membrane as well as in artificial liposomes containing human erythrocyte membrane lipids LacCer, Gb4Cer and galactosyl ceramide (GalCer) leading to destruction of the membrane. Has hemagglutinating activity towards rabbit, human and rat erythrocytes, and at relatively high concentrations towards chicken and horse erythrocytes, but not towards mouse erythrocytes. Has dose-dependent cytotoxic effect on Madin-Darby canine kidney (MDCK), African green monkey kidney (Vero) and human epithelia carcinoma (HeLa) cell lines, but Chinese hamster ovary (CHO), rat sarcoma (XC) and potoroo rat kangaroo kidney (PtK1) cells are highly resistant to the cytotoxic effect of this protein. Impairs malaria parasite development in malaria parasite infected transgenic A.stephensi mosquitoes expressing this protein specifically in their midguts. Binds to ookinetes and leads to strong dose-dependent inhibition of ookinete formation in vitro. Leads to severely impaired oocyst formation and significantly reduced sporozoite production of rodent malaria parasite P.berghei in the salivary glands of the transgenic mosquitoes. The parasite transmission to uninfected mice (vectorial competence) of these mosquitoes is significantly impaired. Also leads to severely impaired oocyst formation of human malaria parasite P.falciparum in transgenic mosquitoes fed on mature P.falciparum gametocyte cultures. May be involved in defense mechanisms acting as a toxic protein to foreign microorganisms. May act in defense against predators. In Pseudocnus echinatus (Sea cucumber), this protein is Galactose/N-acetylgalactosamine-binding lectin CEL-III.